A 603-amino-acid polypeptide reads, in one-letter code: MINHKRLSVPRILTPVALAITLAACSSGPRQPDGVDVTLEPTQSVQNYMIQADSTEGSLRNDWLIMATKAAIQANQFDQAELLIKRLARQQLTEVQQAEWQLARATIQQKQGNYSQLLQLLNFKPWWKLPNEQWKDYYLMRADAYQGLNQAFEANRQLVAFGQYASSAEQREISSRIWMNFGSYSEYELTSLETEPNEDVLDGWLQLAVYAKTLSGNLSQLKNTLERWLSENPSHPAAIYTPEEIQNILSLDIVKPNNTALLLPLTGKFSPQAQLIRDGFVFAMMNDRNRDPSATLTVIDTNAYNADQIKQRLINKNIDFVVGPLEKENVELLHTTMDGSANGPTIPALALNIPEDVQPDSNICYLALSPEQEAAQAAKHLFSEGYNFPLILAPKGSFGERVTEAFNKEWRKYSSNKVAASYFGDKRQLQKDINEVFGLQESKQRIAQMQSLMRIKLETQPRSRRDVDAVYIVARSTELTLIKPFIEVAINPDAKAPQIFSSSRSNSGGATYEDLTGIIYSDIPLLIDPDPSVTAEMNELWSEQSNMEKRLKALGMDAYKLIGELPQMKVVPGYSVGGQTGILSIDNNCVVQRELSWAERGAL.

The N-terminal stretch at 1-24 (MINHKRLSVPRILTPVALAITLAA) is a signal peptide. Residue Cys-25 is the site of N-palmitoyl cysteine attachment. The S-diacylglycerol cysteine moiety is linked to residue Cys-25.

It belongs to the LpoA family. As to quaternary structure, interacts with PBP1a.

It is found in the cell outer membrane. Regulator of peptidoglycan synthesis that is essential for the function of penicillin-binding protein 1A (PBP1a). The sequence is that of Penicillin-binding protein activator LpoA from Vibrio antiquarius (strain Ex25).